A 31-amino-acid chain; its full sequence is Cytochrome b6-f complex subunit 6 (31 aa).

A helical transmembrane segment spans residues Ile4 to Ser26.

This sequence belongs to the PetL family. The 4 large subunits of the cytochrome b6-f complex are cytochrome b6, subunit IV (17 kDa polypeptide, PetD), cytochrome f and the Rieske protein, while the 4 small subunits are PetG, PetL, PetM and PetN. The complex functions as a dimer.

Its subcellular location is the plastid. The protein localises to the chloroplast thylakoid membrane. Component of the cytochrome b6-f complex, which mediates electron transfer between photosystem II (PSII) and photosystem I (PSI), cyclic electron flow around PSI, and state transitions. PetL is important for photoautotrophic growth as well as for electron transfer efficiency and stability of the cytochrome b6-f complex. The chain is Cytochrome b6-f complex subunit 6 from Illicium oligandrum (Star anise).